The following is a 514-amino-acid chain: 2,3-bisphosphoglycerate-independent phosphoglycerate mutase (514 aa).

Residues aspartate 14 and serine 64 each coordinate Mn(2+). Catalysis depends on serine 64, which acts as the Phosphoserine intermediate. Residues histidine 125, 155 to 156, arginine 187, arginine 193, 263 to 266, and lysine 336 each bind substrate; these read RD and RADR. 5 residues coordinate Mn(2+): aspartate 403, histidine 407, aspartate 444, histidine 445, and histidine 463.

Belongs to the BPG-independent phosphoglycerate mutase family. In terms of assembly, monomer. The cofactor is Mn(2+).

It carries out the reaction (2R)-2-phosphoglycerate = (2R)-3-phosphoglycerate. It functions in the pathway carbohydrate degradation; glycolysis; pyruvate from D-glyceraldehyde 3-phosphate: step 3/5. Catalyzes the interconversion of 2-phosphoglycerate and 3-phosphoglycerate. This is 2,3-bisphosphoglycerate-independent phosphoglycerate mutase from Shigella dysenteriae serotype 1 (strain Sd197).